The primary structure comprises 464 residues: tRNA-2-methylthio-N(6)-dimethylallyladenosine synthase (464 aa).

Residues 4-119 (RTFHIMTFGC…APQAIERLVQ (116 aa)) enclose the MTTase N-terminal domain. 6 residues coordinate [4Fe-4S] cluster: Cys-13, Cys-48, Cys-82, Cys-158, Cys-162, and Cys-165. The Radical SAM core domain occupies 144–375 (GEVPVSAYVN…QEVQNEYSEA (232 aa)). The region spanning 378–461 (QAMVGKTVMV…KHSLTGEPAG (84 aa)) is the TRAM domain. The disordered stretch occupies residues 393-420 (SPKSAAGSGTDAQNAAEESGRTASSWQG).

The protein belongs to the methylthiotransferase family. MiaB subfamily. As to quaternary structure, monomer. The cofactor is [4Fe-4S] cluster.

Its subcellular location is the cytoplasm. The catalysed reaction is N(6)-dimethylallyladenosine(37) in tRNA + (sulfur carrier)-SH + AH2 + 2 S-adenosyl-L-methionine = 2-methylsulfanyl-N(6)-dimethylallyladenosine(37) in tRNA + (sulfur carrier)-H + 5'-deoxyadenosine + L-methionine + A + S-adenosyl-L-homocysteine + 2 H(+). Its function is as follows. Catalyzes the methylthiolation of N6-(dimethylallyl)adenosine (i(6)A), leading to the formation of 2-methylthio-N6-(dimethylallyl)adenosine (ms(2)i(6)A) at position 37 in tRNAs that read codons beginning with uridine. This Oleidesulfovibrio alaskensis (strain ATCC BAA-1058 / DSM 17464 / G20) (Desulfovibrio alaskensis) protein is tRNA-2-methylthio-N(6)-dimethylallyladenosine synthase.